The primary structure comprises 284 residues: RNase adapter protein RapZ (284 aa).

8–15 (GRSGSGKS) contributes to the ATP binding site. Residue 56–59 (DVRN) coordinates GTP. The interval 266–284 (RSRGKNAQSRHRTLEKSKS) is RNA-binding.

The protein belongs to the RapZ-like family. RapZ subfamily. In terms of assembly, homotrimer.

Functionally, modulates the synthesis of GlmS, by affecting the processing and stability of the regulatory small RNA GlmZ. When glucosamine-6-phosphate (GlcN6P) concentrations are high in the cell, RapZ binds GlmZ and targets it to cleavage by RNase E. Consequently, GlmZ is inactivated and unable to activate GlmS synthesis. Under low GlcN6P concentrations, RapZ is sequestered and inactivated by an other regulatory small RNA, GlmY, preventing GlmZ degradation and leading to synthesis of GlmS. The chain is RNase adapter protein RapZ from Sodalis glossinidius (strain morsitans).